The following is a 1035-amino-acid chain: Electrogenic sodium bicarbonate cotransporter 1 (1035 aa).

Over 1 to 421 the chain is Cytoplasmic; it reads MSSEKECLEN…FASDFYDALS (421 aa). Residues 192–217 are compositionally biased toward polar residues; it reads SRLFSTPDNGSPTMTHRNLTSTSLND. 2 disordered regions span residues 192–222 and 348–389; these read SRLFSTPDNGSPTMTHRNLTSTSLNDVSDKP and IEPP…GDSE. Over residues 376–389 the composition is skewed to basic and acidic residues; sequence APHDDGGGGHGDSE. A helical membrane pass occupies residues 422-446; that stretch reads IQSLSAILFIYLGTVTNAITFGGLL. Over 447–456 the chain is Extracellular; that stretch reads GDATENMQGV. The helical transmembrane segment at 457 to 475 threads the bilayer; it reads LESFLGTAVSGAVFCLFGG. A topological domain (cytoplasmic) is located at residue glutamine 476. Residues 477–497 form a discontinuously helical membrane-spanning segment; the sequence is PLTILSSTGPVLVFERLLFNF. The Extracellular segment spans residues 498–505; that stretch reads SKDNDFDY. The chain crosses the membrane as a helical span at residues 506–526; the sequence is LEFRLWIGLWSAFQCLILVAT. Topologically, residues 527–540 are cytoplasmic; that stretch reads DASFLVKYFTRFTE. The chain crosses the membrane as a helical span at residues 541 to 564; the sequence is EGFSSLISFIFIYDAFKKMIKLAD. Topologically, residues 565–648 are extracellular; sequence YYPINSHFKV…GSNCKYVPDI (84 aa). N-linked (GlcNAc...) asparagine glycans are attached at residues asparagine 591, asparagine 596, asparagine 609, and asparagine 617. Residues 649-666 form a helical membrane-spanning segment; it reads TLMSFILFLGTYTCSMAL. The Cytoplasmic segment spans residues 667–681; the sequence is KKFKTSRYFPTTARK. A helical membrane pass occupies residues 682–701; the sequence is LISDFAIILSILIFCGLDAL. At 702–735 the chain is on the extracellular side; sequence LGVDTPKLIVPSEFKPTSPNRGWFVPPFGGNPWW. Residues 736–763 form a helical membrane-spanning segment; the sequence is VYLAAAIPALLVTILIFMDQQITGVIVN. Over 764 to 775 the chain is Cytoplasmic; it reads RKEHKLKKGAGY. The helical transmembrane segment at 776–792 threads the bilayer; it reads HLDLFWVAILMVVCSFM. A topological domain (extracellular) is located at residue alanine 793. Residues 794–811 traverse the membrane as a discontinuously helical segment; that stretch reads LPWYVAATVISIAHIDSL. Residues 812-833 lie on the Cytoplasmic side of the membrane; that stretch reads KMETETSAPGEQPKFLGVREQR. Residues 834-850 traverse the membrane as a helical segment; sequence VTGTVVFLLTGLSVFMA. The Extracellular portion of the chain corresponds to 851-857; that stretch reads PILKFIP. A helical transmembrane segment spans residues 858 to 874; it reads MPVLYGVFLYMGVASLN. Residues 875-916 are Cytoplasmic-facing; that stretch reads GVQFMDRLKLLLMPPKYQPDFIYLRHVPLRRVHLFTFLQVVC. The segment at residues 917-942 is an intramembrane region (discontinuously helical); it reads LAMLWILKSTVAAIIFPVMILALVAV. Topologically, residues 943-1035 are cytoplasmic; sequence RKAMDYFFSQ…PTFLERHTSC (93 aa). The segment at 968–1035 is disordered; sequence KKKEDEKKKK…PTFLERHTSC (68 aa). Residues 1007-1035 show a composition bias toward basic and acidic residues; sequence IMEKEPFLIDSKPSDRENSPTFLERHTSC.

This sequence belongs to the anion exchanger (TC 2.A.31) family. Homodimer. Expressed in kidney and to a lower extent in bladder, brain, intestine, large intestine and eye.

The protein localises to the basolateral cell membrane. The protein resides in the cell membrane. The catalysed reaction is 2 hydrogencarbonate(out) + Na(+)(out) = 2 hydrogencarbonate(in) + Na(+)(in). It carries out the reaction 3 hydrogencarbonate(out) + Na(+)(out) = 3 hydrogencarbonate(in) + Na(+)(in). Electrogenic sodium/bicarbonate cotransporter with a Na(+):HCO3(-) stoichiometry varying from 1:2 to 1:3. May regulate bicarbonate influx/efflux at the basolateral membrane of cells and regulate intracellular pH. The protein is Electrogenic sodium bicarbonate cotransporter 1 (SLC4A4) of Ambystoma tigrinum (Eastern tiger salamander).